A 488-amino-acid chain; its full sequence is Bifunctional protein HldE (488 aa).

The interval 1 to 327 is ribokinase; sequence MDDTLAKLPR…GLAHGEHADP (327 aa). 201-204 is an ATP binding site; it reads NRRE. The active site involves Asp272. The interval 354–488 is cytidylyltransferase; that stretch reads FTNGCFDLLH…GRMNAPAVGG (135 aa).

In the N-terminal section; belongs to the carbohydrate kinase PfkB family. The protein in the C-terminal section; belongs to the cytidylyltransferase family. Homodimer.

It catalyses the reaction D-glycero-beta-D-manno-heptose 7-phosphate + ATP = D-glycero-beta-D-manno-heptose 1,7-bisphosphate + ADP + H(+). The catalysed reaction is D-glycero-beta-D-manno-heptose 1-phosphate + ATP + H(+) = ADP-D-glycero-beta-D-manno-heptose + diphosphate. The protein operates within nucleotide-sugar biosynthesis; ADP-L-glycero-beta-D-manno-heptose biosynthesis; ADP-L-glycero-beta-D-manno-heptose from D-glycero-beta-D-manno-heptose 7-phosphate: step 1/4. It participates in nucleotide-sugar biosynthesis; ADP-L-glycero-beta-D-manno-heptose biosynthesis; ADP-L-glycero-beta-D-manno-heptose from D-glycero-beta-D-manno-heptose 7-phosphate: step 3/4. In terms of biological role, catalyzes the phosphorylation of D-glycero-D-manno-heptose 7-phosphate at the C-1 position to selectively form D-glycero-beta-D-manno-heptose-1,7-bisphosphate. Functionally, catalyzes the ADP transfer from ATP to D-glycero-beta-D-manno-heptose 1-phosphate, yielding ADP-D-glycero-beta-D-manno-heptose. This chain is Bifunctional protein HldE, found in Caulobacter sp. (strain K31).